A 309-amino-acid polypeptide reads, in one-letter code: NAD kinase (309 aa).

Residue aspartate 89 is the Proton acceptor of the active site. Residues 89 to 90 (DG), 163 to 164 (NE), histidine 174, arginine 191, aspartate 193, and 204 to 209 (TAYALS) contribute to the NAD(+) site.

It belongs to the NAD kinase family. A divalent metal cation is required as a cofactor.

The protein localises to the cytoplasm. It catalyses the reaction NAD(+) + ATP = ADP + NADP(+) + H(+). Its function is as follows. Involved in the regulation of the intracellular balance of NAD and NADP, and is a key enzyme in the biosynthesis of NADP. Catalyzes specifically the phosphorylation on 2'-hydroxyl of the adenosine moiety of NAD to yield NADP. The sequence is that of NAD kinase from Shewanella baltica (strain OS155 / ATCC BAA-1091).